Consider the following 482-residue polypeptide: MEQPQAECPAPSKTNSAETVESEKHEALSGPEKHPQDKDGADAAPEKHPQDKDGADAHGEAGKQKSGDQTLPPVQDGGNLECPPPEASSSPPGPACGIPSEVETTEACSRPQQLPQSPRIQQPDLDFYCVKWIPWKGERTPIITQSSNGPCPLLAIMNILFLQWKVKLPPQKEVITSDELLTHLGNCLLSIKPQEKSEGLQLNFQQNVGDAMTVLPKLATGLDVNVRFTGVSDFEYTPECSVFDLLGVPLYHGWLVDPQSPEAVSAVGKLSYNQLVEKIIICKHSSDSNLVTEGLIAEQFLETTAAQLTYHGLCELTATAKEDELSVFFRNNHFSTMTKHKSHLYLLVTDQGFLQEEQVVWESLHNVDGDSCFCDSDFHLSHSLGKSHGAEGGSGSPEKQLQVDQDYLIALSLQQQQQPQGMLGLSDLELAQQLQQEEYQQQQAVQPVRTRAPSSPGRGATSGRPAGERRQRSKTESDCVLL.

The tract at residues 1–119 (MEQPQAECPA…RPQQLPQSPR (119 aa)) is disordered. Positions 21-66 (ESEKHEALSGPEKHPQDKDGADAAPEKHPQDKDGADAHGEAGKQKS) are enriched in basic and acidic residues. A compositionally biased stretch (pro residues) spans 82-94 (CPPPEASSSPPGP). The segment covering 106–119 (EACSRPQQLPQSPR) has biased composition (polar residues). The residue at position 117 (Ser117) is a Phosphoserine. The active-site Nucleophile is the Cys151. His333 (proton acceptor) is an active-site residue. Residues 402 to 441 (QVDQDYLIALSLQQQQQPQGMLGLSDLELAQQLQQEEYQQ) are ubiquitin-binding domain (UBD). Positions 437–446 (EEYQQQQAVQ) are enriched in low complexity. Residues 437–482 (EEYQQQQAVQPVRTRAPSSPGRGATSGRPAGERRQRSKTESDCVLL) are disordered. Ser454 bears the Phosphoserine mark. Positions 466–482 (AGERRQRSKTESDCVLL) are enriched in basic and acidic residues.

The protein belongs to the MINDY deubiquitinase family. FAM63 subfamily.

The catalysed reaction is Thiol-dependent hydrolysis of ester, thioester, amide, peptide and isopeptide bonds formed by the C-terminal Gly of ubiquitin (a 76-residue protein attached to proteins as an intracellular targeting signal).. Functionally, hydrolase that can specifically remove 'Lys-48'-linked conjugated ubiquitin from proteins. Has exodeubiquitinase activity and has a preference for long polyubiquitin chains. May play a regulatory role at the level of protein turnover. The polypeptide is Ubiquitin carboxyl-terminal hydrolase MINDY-1 (Mindy1) (Rattus norvegicus (Rat)).